We begin with the raw amino-acid sequence, 259 residues long: Phosphate import ATP-binding protein PstB 1 (259 aa).

In terms of domain architecture, ABC transporter spans 13-254 (IQVRGLEFFY…PSKTQTEDYI (242 aa)). 45–52 (GPSGCGKS) lines the ATP pocket.

This sequence belongs to the ABC transporter superfamily. Phosphate importer (TC 3.A.1.7) family. As to quaternary structure, the complex is composed of two ATP-binding proteins (PstB), two transmembrane proteins (PstC and PstA) and a solute-binding protein (PstS).

It is found in the cell inner membrane. It catalyses the reaction phosphate(out) + ATP + H2O = ADP + 2 phosphate(in) + H(+). Functionally, part of the ABC transporter complex PstSACB involved in phosphate import. Responsible for energy coupling to the transport system. The protein is Phosphate import ATP-binding protein PstB 1 of Pseudomonas savastanoi pv. phaseolicola (strain 1448A / Race 6) (Pseudomonas syringae pv. phaseolicola (strain 1448A / Race 6)).